A 212-amino-acid chain; its full sequence is 3-demethoxyubiquinol 3-hydroxylase (212 aa).

The segment covering 1 to 14 (MTSPSSRTPRGSTP) has biased composition (low complexity). The disordered stretch occupies residues 1-22 (MTSPSSRTPRGSTPPFEPSADE). Glutamate 58, glutamate 89, histidine 92, glutamate 141, glutamate 173, and histidine 176 together coordinate Fe cation.

Belongs to the COQ7 family. Requires Fe cation as cofactor.

It is found in the cell membrane. It carries out the reaction a 5-methoxy-2-methyl-3-(all-trans-polyprenyl)benzene-1,4-diol + AH2 + O2 = a 3-demethylubiquinol + A + H2O. The protein operates within cofactor biosynthesis; ubiquinone biosynthesis. In terms of biological role, catalyzes the hydroxylation of 2-nonaprenyl-3-methyl-6-methoxy-1,4-benzoquinol during ubiquinone biosynthesis. The sequence is that of 3-demethoxyubiquinol 3-hydroxylase from Rhodospirillum rubrum (strain ATCC 11170 / ATH 1.1.1 / DSM 467 / LMG 4362 / NCIMB 8255 / S1).